The chain runs to 440 residues: FAD-dependent monooxygenase afoD (440 aa).

A helical transmembrane segment spans residues 10-30 (PLSIAIIGGGIIGLMTALGLL). FAD is bound by residues glutamate 41, leucine 145, and aspartate 320. Asparagine 352 carries an N-linked (GlcNAc...) asparagine glycan.

The protein belongs to the paxM FAD-dependent monooxygenase family. It depends on FAD as a cofactor.

Its subcellular location is the membrane. In terms of biological role, FAD-dependent monooxygenase; part of the gene cluster that mediates the biosynthesis of asperfuranone, a probable antitumor agent. The polyketide synthase afoG is responsible for producing the 3,5-dimethyloctadienone moiety from acetyl-CoA, three malonyl-CoA, and two S-adenosyl methionines (SAM). The 3,5-dimethyloctadienone moiety is then loaded onto the SAT domain of afoE and extended with four malonyl-CoA and one SAM, which leads to the formation of 2,4-dihydroxy-6-(5,7-dimethyl-2-oxo-trans-3-trans-5-nonadienyl)-3-methylbenzaldehyde (compound 2) after reductive release and aldol condensation. AfoD is the next enzyme in the biosynthesis sequence and hydroxylates the side chain at the benzylic position of compound 2. After benzylic hydroxylation, a furan ring is formed after five-member ring hemiacetal formation and water elimination. AfoF and afoC are proposed to oxidize the R-diketone proton and to reduce the unconjugated carbonyl group, respectively, to generate asperfuranone. Since no intermediates could be isolated from afoF and afoC deletants, the sequence of these two enzymes is not fully understood. Moreover, since afoC deletant still produces a small amount of asperfuranone, other endogenous oxidoreductases might catalyze the same reaction with much less efficiency. The polypeptide is FAD-dependent monooxygenase afoD (Emericella nidulans (strain FGSC A4 / ATCC 38163 / CBS 112.46 / NRRL 194 / M139) (Aspergillus nidulans)).